Reading from the N-terminus, the 339-residue chain is Agamous-like MADS-box protein AGL86 (339 aa).

In terms of domain architecture, MADS-box spans 1-60 (MRSKIKLSLIANKTSRRTTFRKRKGGITNKLHELTTLCGVKACAVISSPYENPVVWPSTE). Positions 86-112 (TYLQDKITKETKKLESLRRENRESQLR) form a coiled coil.

Interacts with AGL61/DIANA and AGL62.

It is found in the nucleus. In terms of biological role, probable transcription factor. The chain is Agamous-like MADS-box protein AGL86 (AGL86) from Arabidopsis thaliana (Mouse-ear cress).